The primary structure comprises 783 residues: Lon protease (783 aa).

The Lon N-terminal domain occupies 16–210; it reads LPLLASRGVV…KLLEIIKDEI (195 aa). Position 361-368 (361-368) interacts with ATP; that stretch reads GAPGVGKT. In terms of domain architecture, Lon proteolytic spans 597–778; that stretch reads KDRVGVATGM…DQVLDLILGG (182 aa). Residues serine 684 and lysine 727 contribute to the active site.

This sequence belongs to the peptidase S16 family. In terms of assembly, homohexamer. Organized in a ring with a central cavity.

Its subcellular location is the cytoplasm. The catalysed reaction is Hydrolysis of proteins in presence of ATP.. ATP-dependent serine protease that mediates the selective degradation of mutant and abnormal proteins as well as certain short-lived regulatory proteins. Required for cellular homeostasis and for survival from DNA damage and developmental changes induced by stress. Degrades polypeptides processively to yield small peptide fragments that are 5 to 10 amino acids long. Binds to DNA in a double-stranded, site-specific manner. The polypeptide is Lon protease (Halothermothrix orenii (strain H 168 / OCM 544 / DSM 9562)).